Consider the following 367-residue polypeptide: Peptide chain release factor 2 (367 aa).

Position 254 is an N5-methylglutamine (glutamine 254).

It belongs to the prokaryotic/mitochondrial release factor family. In terms of processing, methylated by PrmC. Methylation increases the termination efficiency of RF2.

It localises to the cytoplasm. Its function is as follows. Peptide chain release factor 2 directs the termination of translation in response to the peptide chain termination codons UGA and UAA. The protein is Peptide chain release factor 2 of Aromatoleum aromaticum (strain DSM 19018 / LMG 30748 / EbN1) (Azoarcus sp. (strain EbN1)).